A 293-amino-acid chain; its full sequence is 4-hydroxy-tetrahydrodipicolinate synthase (293 aa).

Thr44 is a binding site for pyruvate. The active-site Proton donor/acceptor is the Tyr132. Lys161 acts as the Schiff-base intermediate with substrate in catalysis. Pyruvate is bound at residue Ile205.

This sequence belongs to the DapA family. As to quaternary structure, homotetramer; dimer of dimers.

The protein resides in the cytoplasm. The catalysed reaction is L-aspartate 4-semialdehyde + pyruvate = (2S,4S)-4-hydroxy-2,3,4,5-tetrahydrodipicolinate + H2O + H(+). It functions in the pathway amino-acid biosynthesis; L-lysine biosynthesis via DAP pathway; (S)-tetrahydrodipicolinate from L-aspartate: step 3/4. Functionally, catalyzes the condensation of (S)-aspartate-beta-semialdehyde [(S)-ASA] and pyruvate to 4-hydroxy-tetrahydrodipicolinate (HTPA). In Thermosipho africanus (strain TCF52B), this protein is 4-hydroxy-tetrahydrodipicolinate synthase.